A 230-amino-acid polypeptide reads, in one-letter code: RING finger protein 141 (230 aa).

The RING-type zinc-finger motif lies at 154–191; it reads ECCICMDGRVDLILPCAHSFCQKCIDKWSDRHRSCPVC.

The polypeptide is RING finger protein 141 (RNF141) (Gallus gallus (Chicken)).